The sequence spans 391 residues: SNIFKGPTVGSSVVAMSARLASTEATFQAKPFKLHKLDSGPDVNMHVTKEDALRYYTQMQTIRRMETAAGNLYKEKKVRGFCHLYSGQEACAVGMKAAMEPGDAAITAYRCHGWTYLSGSPVAKVLCELTGRITGNVYGKGGSMHMYGENFYGGNGIVGAQQPLGTGIAFAMKYKKQKNVCITLFGDGATNQGQLYESMNMAKLWELPVLYVCENNGYGMGTSAARSSASTDYYTRGDYVPGFWVDGMDVLAVRQAIRWGKEWCNAGKGPLMIEMATYRYGGHSMSDPGTSYRTREEIQEVRKTRDPITGFKDKIVTAGLVTEDELKEVDKEIRKEVDAAVKQAHTDKEAPVEMLLTDIYYNTPAQYVRCTTEDVLQQYVTSEEAFKALSK.

The transit peptide at Ser-1–Ser-17 directs the protein to the mitochondrion. Residues His-83, Tyr-109, Arg-110, Gly-148, Gly-156, Val-158, Asp-187, Gly-188, Ala-189, Asn-216, and Tyr-218 each contribute to the pyruvate site. Residues Tyr-109 and Arg-110 each contribute to the thiamine diphosphate site. Positions 156, 158, 187, 188, 189, and 216 each coordinate thiamine diphosphate. Residue Asp-187 participates in Mg(2+) binding. Mg(2+) contacts are provided by Asn-216 and Tyr-218. Thiamine diphosphate is bound at residue His-283. Residues Ser-284 and Ser-291 each carry the phosphoserine modification.

As to quaternary structure, heterotetramer of two PDHA2 and two PDHB subunits. The heterotetramer interacts with DLAT, and is part of the multimeric pyruvate dehydrogenase complex that contains multiple copies of pyruvate dehydrogenase (E1), dihydrolipoamide acetyltransferase (DLAT, E2) and lipoamide dehydrogenase (DLD, E3). Thiamine diphosphate is required as a cofactor. It depends on Mg(2+) as a cofactor.

Its subcellular location is the mitochondrion matrix. The catalysed reaction is N(6)-[(R)-lipoyl]-L-lysyl-[protein] + pyruvate + H(+) = N(6)-[(R)-S(8)-acetyldihydrolipoyl]-L-lysyl-[protein] + CO2. Its activity is regulated as follows. Pyruvate dehydrogenase activity is inhibited by phosphorylation of PDHA2; it is reactivated by dephosphorylation. Functionally, the pyruvate dehydrogenase complex catalyzes the overall conversion of pyruvate to acetyl-CoA and CO(2), and thereby links the glycolytic pathway to the tricarboxylic cycle. The protein is Pyruvate dehydrogenase E1 component subunit alpha type II, mitochondrial of Ascaris suum (Pig roundworm).